The following is a 352-amino-acid chain: Protein RecA (352 aa).

Residue 65–72 (GPESSGKT) participates in ATP binding. The disordered stretch occupies residues 332-352 (EEVEKADVKKDAKKDAAEALK). Basic and acidic residues predominate over residues 333 to 352 (EVEKADVKKDAKKDAAEALK).

The protein belongs to the RecA family.

It is found in the cytoplasm. Functionally, can catalyze the hydrolysis of ATP in the presence of single-stranded DNA, the ATP-dependent uptake of single-stranded DNA by duplex DNA, and the ATP-dependent hybridization of homologous single-stranded DNAs. It interacts with LexA causing its activation and leading to its autocatalytic cleavage. The sequence is that of Protein RecA from Photobacterium profundum (strain SS9).